A 341-amino-acid polypeptide reads, in one-letter code: MRPILLAGHERALTQIKYNPDGDLIFSVSKDQQICVWFAHNGERLGTYRGHQGAIWTIDVDPTSTILASGSADNTIRLWDIKTGKCLKTWDFPTAVKRVEFNEDGTKLLGVTEKRMGHLGTIVVLDIKIDVEAEQSDEKVMTIVCDESKATVAGWSYLSKYIIAGHEDGSVSQYDGKTGDLLYNIPIHELNQPITDLQWSQDRTYFITASKDKTSKLISSKDLEVLKSYTADTPLNSAAITPKKDFVILGGGQAAMDVTTTAARQGKFEARFYHKIFEDEIGRVRGHFGPLNTVAADPTGKGYASGGEDGYVRVHAFDKGYYDFLYEVERERQNRLAAASA.

5 WD repeats span residues 8–49 (GHER…GTYR), 50–91 (GHQG…KTWD), 135–184 (QSDE…LLYN), 189–228 (ELNQ…VLKS), and 286–325 (GHFG…YDFL).

This sequence belongs to the eIF-3 subunit I family. In terms of assembly, component of the eukaryotic translation initiation factor 3 (eIF-3) complex.

The protein resides in the cytoplasm. Its function is as follows. Component of the eukaryotic translation initiation factor 3 (eIF-3) complex, which is involved in protein synthesis of a specialized repertoire of mRNAs and, together with other initiation factors, stimulates binding of mRNA and methionyl-tRNAi to the 40S ribosome. The eIF-3 complex specifically targets and initiates translation of a subset of mRNAs involved in cell proliferation. This chain is Eukaryotic translation initiation factor 3 subunit I, found in Chaetomium globosum (strain ATCC 6205 / CBS 148.51 / DSM 1962 / NBRC 6347 / NRRL 1970) (Soil fungus).